Here is a 140-residue protein sequence, read N- to C-terminus: uncharacterized protein (140 aa).

2 helical membrane passes run 63–83 (LGFV…TLAT) and 119–139 (ILLY…IFIN).

Its subcellular location is the membrane. This is an uncharacterized protein from Schizosaccharomyces pombe (strain 972 / ATCC 24843) (Fission yeast).